We begin with the raw amino-acid sequence, 388 residues long: UDP-N-acetylglucosamine--N-acetylmuramyl-(pentapeptide) pyrophosphoryl-undecaprenol N-acetylglucosamine transferase (388 aa).

UDP-N-acetyl-alpha-D-glucosamine-binding positions include Thr42–Gly44, Asn159, Arg195, Ser223, Ile277, and Gln322.

It belongs to the glycosyltransferase 28 family. MurG subfamily.

It localises to the cell inner membrane. It catalyses the reaction di-trans,octa-cis-undecaprenyl diphospho-N-acetyl-alpha-D-muramoyl-L-alanyl-D-glutamyl-meso-2,6-diaminopimeloyl-D-alanyl-D-alanine + UDP-N-acetyl-alpha-D-glucosamine = di-trans,octa-cis-undecaprenyl diphospho-[N-acetyl-alpha-D-glucosaminyl-(1-&gt;4)]-N-acetyl-alpha-D-muramoyl-L-alanyl-D-glutamyl-meso-2,6-diaminopimeloyl-D-alanyl-D-alanine + UDP + H(+). It participates in cell wall biogenesis; peptidoglycan biosynthesis. In terms of biological role, cell wall formation. Catalyzes the transfer of a GlcNAc subunit on undecaprenyl-pyrophosphoryl-MurNAc-pentapeptide (lipid intermediate I) to form undecaprenyl-pyrophosphoryl-MurNAc-(pentapeptide)GlcNAc (lipid intermediate II). The polypeptide is UDP-N-acetylglucosamine--N-acetylmuramyl-(pentapeptide) pyrophosphoryl-undecaprenol N-acetylglucosamine transferase (Albidiferax ferrireducens (strain ATCC BAA-621 / DSM 15236 / T118) (Rhodoferax ferrireducens)).